The sequence spans 1134 residues: Phospholipid-transporting ATPase IH (1134 aa).

Over Met-1–Ile-61 the chain is Cytoplasmic. A helical transmembrane segment spans residues Pro-62–Leu-82. Topologically, residues Val-83–Asp-88 are extracellular. Residues Thr-89–Lys-110 form a helical membrane-spanning segment. Over Gln-111–Phe-296 the chain is Cytoplasmic. Residues Leu-297 to Trp-318 form a helical membrane-spanning segment. At Gln-319–Phe-349 the chain is on the extracellular side. Residues Leu-350 to Lys-372 traverse the membrane as a helical segment. The Cytoplasmic segment spans residues Phe-373–Glu-881. Catalysis depends on Asp-414, which acts as the 4-aspartylphosphate intermediate. Asp-414, Lys-415, Thr-416, Glu-511, Phe-553, Lys-576, Arg-607, Thr-687, Gly-688, and Asp-689 together coordinate ATP. Residue Asp-414 participates in Mg(2+) binding. Position 416 (Thr-416) interacts with Mg(2+). Ser-738 carries the post-translational modification Phosphoserine. The ATP site is built by Arg-798 and Lys-804. Asp-825 serves as a coordination point for Mg(2+). ATP contacts are provided by Asn-828 and Asp-829. Asp-829 provides a ligand contact to Mg(2+). Residues Leu-882–Phe-902 traverse the membrane as a helical segment. Residues Phe-903–Thr-914 lie on the Extracellular side of the membrane. Residues Ala-915–Leu-934 traverse the membrane as a helical segment. At Met-935 to Val-964 the chain is on the cytoplasmic side. A helical membrane pass occupies residues Phe-965 to Val-986. The Extracellular segment spans residues Phe-987 to Gly-1000. The helical transmembrane segment at Asn-1001 to Asp-1023 threads the bilayer. At Thr-1024–Trp-1029 the chain is on the cytoplasmic side. Residues Ile-1030 to Gly-1050 traverse the membrane as a helical segment. At Gly-1051–Gln-1068 the chain is on the extracellular side. A helical transmembrane segment spans residues Met-1069–Lys-1093. At Lys-1094 to Phe-1134 the chain is on the cytoplasmic side.

The protein belongs to the cation transport ATPase (P-type) (TC 3.A.3) family. Type IV subfamily. Component of a P4-ATPase flippase complex which consists of a catalytic alpha subunit ATP11A and an accessory beta subunit TMEM30A. The cofactor is Mg(2+). Proteolytically cleaved by CASP3. In terms of tissue distribution, widely expressed. Expressed in myoblasts.

It localises to the cell membrane. The protein resides in the early endosome. It is found in the recycling endosome. Its subcellular location is the endoplasmic reticulum membrane. The catalysed reaction is ATP + H2O + phospholipidSide 1 = ADP + phosphate + phospholipidSide 2.. The enzyme catalyses a 1,2-diacyl-sn-glycero-3-phospho-L-serine(out) + ATP + H2O = a 1,2-diacyl-sn-glycero-3-phospho-L-serine(in) + ADP + phosphate + H(+). It carries out the reaction a 1,2-diacyl-sn-glycero-3-phosphoethanolamine(out) + ATP + H2O = a 1,2-diacyl-sn-glycero-3-phosphoethanolamine(in) + ADP + phosphate + H(+). With respect to regulation, the flippase activity is inactivated by caspase-mediated cleavage in apoptotic cells, allowing for PS exposure on the cell surface and engulfment of apoptotic cells by macrophages. The ATPase activity is up-regulated by aminophospholipids PS and PE and down-regulated by increasing intracellular Ca2+ levels. In terms of biological role, catalytic component of a P4-ATPase flippase complex which catalyzes the hydrolysis of ATP coupled to the transport of aminophospholipids, phosphatidylserines (PS) and phosphatidylethanolamines (PE), from the outer to the inner leaflet of the plasma membrane. Does not show flippase activity toward phosphatidylcholine (PC). Contributes to the maintenance of membrane lipid asymmetry with a specific role in morphogenesis of muscle cells. In myoblasts, mediates PS enrichment at the inner leaflet of plasma membrane, triggering PIEZO1-dependent Ca2+ influx and Rho GTPases signal transduction, subsequently leading to the assembly of cortical actomyosin fibers and myotube formation. May be involved in the uptake of farnesyltransferase inhibitor drugs, such as lonafarnib. This is Phospholipid-transporting ATPase IH (ATP11A) from Homo sapiens (Human).